Here is a 98-residue protein sequence, read N- to C-terminus: NADH-ubiquinone oxidoreductase chain 4L (98 aa).

A run of 3 helical transmembrane segments spans residues 1-21 (MSMM…GLLM), 29-49 (SLLC…VTIL), and 61-81 (IILL…LVMV).

This sequence belongs to the complex I subunit 4L family. Core subunit of respiratory chain NADH dehydrogenase (Complex I) which is composed of 45 different subunits.

The protein resides in the mitochondrion inner membrane. It catalyses the reaction a ubiquinone + NADH + 5 H(+)(in) = a ubiquinol + NAD(+) + 4 H(+)(out). In terms of biological role, core subunit of the mitochondrial membrane respiratory chain NADH dehydrogenase (Complex I) which catalyzes electron transfer from NADH through the respiratory chain, using ubiquinone as an electron acceptor. Part of the enzyme membrane arm which is embedded in the lipid bilayer and involved in proton translocation. The protein is NADH-ubiquinone oxidoreductase chain 4L (MT-ND4L) of Zalophus californianus (California sealion).